The sequence spans 170 residues: Adenine phosphoribosyltransferase (170 aa).

This sequence belongs to the purine/pyrimidine phosphoribosyltransferase family. In terms of assembly, homodimer.

It is found in the cytoplasm. The enzyme catalyses AMP + diphosphate = 5-phospho-alpha-D-ribose 1-diphosphate + adenine. It participates in purine metabolism; AMP biosynthesis via salvage pathway; AMP from adenine: step 1/1. Functionally, catalyzes a salvage reaction resulting in the formation of AMP, that is energically less costly than de novo synthesis. The protein is Adenine phosphoribosyltransferase of Mycoplasmopsis pulmonis (strain UAB CTIP) (Mycoplasma pulmonis).